We begin with the raw amino-acid sequence, 348 residues long: Anthranilate phosphoribosyltransferase (348 aa).

5-phospho-alpha-D-ribose 1-diphosphate-binding positions include G87, 90–91 (GD), T95, 97–100 (NIST), 115–123 (KHGNRSASG), and S127. G87 provides a ligand contact to anthranilate. S99 is a Mg(2+) binding site. Residue N118 participates in anthranilate binding. Position 173 (R173) interacts with anthranilate. Mg(2+) contacts are provided by D232 and E233.

The protein belongs to the anthranilate phosphoribosyltransferase family. As to quaternary structure, homodimer. Requires Mg(2+) as cofactor.

The enzyme catalyses N-(5-phospho-beta-D-ribosyl)anthranilate + diphosphate = 5-phospho-alpha-D-ribose 1-diphosphate + anthranilate. It participates in amino-acid biosynthesis; L-tryptophan biosynthesis; L-tryptophan from chorismate: step 2/5. Functionally, catalyzes the transfer of the phosphoribosyl group of 5-phosphorylribose-1-pyrophosphate (PRPP) to anthranilate to yield N-(5'-phosphoribosyl)-anthranilate (PRA). This Synechococcus sp. (strain CC9311) protein is Anthranilate phosphoribosyltransferase.